A 490-amino-acid polypeptide reads, in one-letter code: POC1 centriolar protein homolog B (490 aa).

7 WD repeats span residues 16–55, 58–97, 100–139, 142–181, 184–223, 226–265, and 268–307; these read GHKDVISCADFNPNNKQLATGSCDKSLMIWNLAPKARAFR, GHTDVITGVNFAPSGSLVASSSRDQTVRLWTPSIKGESTV, AHTASVRSVHFSRDGQRLVTASDDKSVKVWGVERKKFLYS, RHTNWVRCARFSPDGRLIASCGDDRTVRLWDTSSHQCINI, DYGGSATFVDFNSSGTCIASSGADNTIKIWDIRTNKLIQH, VHNAGVNCFSFHPSGNYLISGSSDSTIKILDLLEGRLIYT, and GHKGPVLTVTFSRDGDLFASGGADSQVLMWKTNFDSLNYR. Polar residues predominate over residues 375 to 388; that stretch reads DGASSSRAQFTSGM. The interval 375–427 is disordered; the sequence is DGASSSRAQFTSGMDSGPFRTHTQAREEEDENQEERFAGGMTASPAERSGIPS. A coiled-coil region spans residues 431–463; sequence STLENIVQQLDILTQTVAVLEERLTLTEDKLRT.

It belongs to the WD repeat POC1 family.

It is found in the cytoplasm. The protein localises to the cytoskeleton. Its subcellular location is the microtubule organizing center. It localises to the centrosome. The protein resides in the centriole. In terms of biological role, plays an important role in centriole assembly and/or stability and ciliogenesis. Involved in early steps of centriole duplication, as well as in the later steps of centriole length control. This is POC1 centriolar protein homolog B from Danio rerio (Zebrafish).